A 261-amino-acid chain; its full sequence is UPF0328 protein ECU03_1620 (261 aa).

Belongs to the UPF0328 family.

The chain is UPF0328 protein ECU03_1620 from Encephalitozoon cuniculi (strain GB-M1) (Microsporidian parasite).